A 324-amino-acid polypeptide reads, in one-letter code: Taste receptor type 2 member 116 (324 aa).

The Extracellular segment spans residues 1–2 (MN). The helical transmembrane segment at 3–23 (GVLYITFTVILSVEVIIGNFG) threads the bilayer. Residues 24–55 (NGIIALVNIMDLAKRRKISSVDQILTALAISR) lie on the Cytoplasmic side of the membrane. A helical membrane pass occupies residues 56–76 (IVLLWLVLVSWWLSMFYPGQW). The Extracellular segment spans residues 77–94 (MTEGIDVIVHNVWTTLNQ). Residues 95-115 (ISLWLATSFSVFCFLKVANFS) traverse the membrane as a helical segment. The Cytoplasmic segment spans residues 116–128 (NTIFFYLKIRVKK). The helical transmembrane segment at 129–149 (VMTGTLIMFLLLLGLNIIVIN) threads the bilayer. Residues 150-183 (ASKTILIPEYKVNMSNSLNLKNTQISMLFPFANT) lie on the Extracellular side of the membrane. N162 is a glycosylation site (N-linked (GlcNAc...) asparagine). The chain crosses the membrane as a helical span at residues 184-204 (LFGFIPFAVSLVTFLLLFFSL). The Cytoplasmic segment spans residues 205–236 (WKHQRKMHHGAQGCRDSSTKAHIRVLQTLIAS). Residues 237 to 257 (ILLYFVFFLSLVVKVWISLFL) form a helical membrane-spanning segment. Over 258-261 (ERML) the chain is Extracellular. The chain crosses the membrane as a helical span at residues 262–282 (LLLITQAAKIAFPSLHPWVLI). The Cytoplasmic segment spans residues 283-324 (LGNAKLRKASLSALQWLRCRHKDEHRRVQRPEVHSCGSSCMP).

This sequence belongs to the G-protein coupled receptor T2R family.

It localises to the membrane. Its function is as follows. Putative taste receptor which may play a role in the perception of bitterness. This is Taste receptor type 2 member 116 from Rattus norvegicus (Rat).